Consider the following 119-residue polypeptide: Bombesin (119 aa).

An N-terminal signal peptide occupies residues 1 to 29 (MSAIPLNRILPLGFLFHLLIFSFISLSSC). Residues 30 to 44 (MEFVEDPNNQGRISL) constitute a propeptide that is removed on maturation. The residue at position 58 (Met-58) is a Methionine amide. A propeptide spanning residues 62-119 (SLQDTDFEEMESFAKRNVENMRAALLQEQNRAESERELRHAQLVVRNILEQYLKNMQN) is cleaved from the precursor.

This sequence belongs to the bombesin/neuromedin-B/ranatensin family. Localized to the cutaneous granular glands in the skin and the brain.

It localises to the secreted. Functionally, stimulates smooth muscle contraction. Role in induction of hypothermia, stimulation of DNA replication and release of many gastrointestinal hormones. The protein is Bombesin of Bombina orientalis (Oriental fire-bellied toad).